Consider the following 826-residue polypeptide: Sister chromatid cohesion protein PDS5 homolog D (826 aa).

5 HEAT repeats span residues 18–54 (GTNL…LSMQ), 55–94 (SALI…ITAP), 151–188 (DLIL…DETE), 189–226 (QVST…RCAR), and 230–267 (PYII…HSPV). 2 disordered regions span residues 261 to 551 (PKVH…EVES) and 640 to 826 (KKSK…KRKS). Basic and acidic residues-rich tracts occupy residues 269 to 286 (TKEH…KENL) and 296 to 309 (RHET…EKVR). The short motif at 281-288 (SRKENLSK) is the Nuclear localization signal 1 element. Polar residues predominate over residues 311–323 (GNKSSLLKQSLKQ). Residues 357–364 (GKRDPLKT) carry the Nuclear localization signal 2 motif. The segment covering 396 to 408 (SPATSSRSLTGSL) has biased composition (polar residues). One copy of the HEAT 6 repeat lies at 424 to 461 (SLSSPRLKKLASCFRDEEPNQEDDRKIGNSSKQTRSKN). Residues 437–450 (FRDEEPNQEDDRKI) are compositionally biased toward basic and acidic residues. Positions 451 to 460 (GNSSKQTRSK) are enriched in polar residues. Residues 644-663 (NVAVSVEPTSSSGVRSSSRT) are compositionally biased toward low complexity. Positions 665–701 (MKKDCGKRLNKQVEKTREGKNLRSLKELNAETDRTAE) are enriched in basic and acidic residues. Over residues 702-724 (EQEVSLEAESDDRSEEQEYEDDC) the composition is skewed to acidic residues. Basic and acidic residues predominate over residues 725–746 (SDKKEQSQDKGVEAETKEEEKQ). Acidic residues-rich tracts occupy residues 752–763 (GESEGEDSESEE), 771–800 (DDME…EVDD), and 811–826 (EKEE…KRKS). Positions 770–825 (TDDMEDDEEEEEEEIDHMEDEAEEEKEEVDDKEASANMSEIEKEEEEEEEDEEKRK) form a coiled coil.

Belongs to the PDS5 family. As to quaternary structure, interacts with the cohesin complex.

Its subcellular location is the nucleus. In terms of biological role, cohesin cofactor dispensable during the meiotic division but playing an important role in DNA repair by homologous recombination (HR) probably by helping SMC5/SMC6 complex. Regulator of sister chromatid cohesion in mitosis which may stabilize cohesin complex association with chromatin. May couple sister chromatid cohesion during mitosis to DNA replication. Cohesion ensures that chromosome partitioning is accurate in both meiotic and mitotic cells and plays an important role in DNA repair. The chain is Sister chromatid cohesion protein PDS5 homolog D from Arabidopsis thaliana (Mouse-ear cress).